The primary structure comprises 175 residues: Protein CENTRORADIALIS-like (175 aa).

It belongs to the phosphatidylethanolamine-binding protein family. As to expression, expressed in tissues surrounding vascular bundles in hypocotyl of 2-week-old plants.

Its subcellular location is the cytoplasm. Functionally, may form complexes with phosphorylated ligands by interfering with kinases and their effectors. Can substitute for TERMINAL FLOWER 1 (in vitro). The protein is Protein CENTRORADIALIS-like (CEN) of Arabidopsis thaliana (Mouse-ear cress).